Consider the following 244-residue polypeptide: Small ribosomal subunit protein eS4 (244 aa).

The region spanning 37 to 123 (VPLAILLKYY…AKYKFVRIMN (87 aa)) is the S4 RNA-binding domain.

It belongs to the eukaryotic ribosomal protein eS4 family.

This Sulfolobus acidocaldarius (strain ATCC 33909 / DSM 639 / JCM 8929 / NBRC 15157 / NCIMB 11770) protein is Small ribosomal subunit protein eS4 (rps4e).